A 346-amino-acid polypeptide reads, in one-letter code: D-fructose 1,6-bisphosphatase class 2/sedoheptulose 1,7-bisphosphatase (346 aa).

4 residues coordinate Mn(2+): aspartate 33, glutamate 57, aspartate 97, and glutamate 100. Substrate contacts are provided by residues 100–102 (EGT), tyrosine 131, 176–178 (RDR), and 198–200 (DGD). Glutamate 225 contributes to the Mn(2+) binding site.

The protein belongs to the FBPase class 2 family. In terms of assembly, homotetramer. Requires Mn(2+) as cofactor.

It catalyses the reaction beta-D-fructose 1,6-bisphosphate + H2O = beta-D-fructose 6-phosphate + phosphate. The enzyme catalyses D-sedoheptulose 1,7-bisphosphate + H2O = D-sedoheptulose 7-phosphate + phosphate. It functions in the pathway carbohydrate biosynthesis; Calvin cycle. Catalyzes the hydrolysis of fructose 1,6-bisphosphate (Fru 1,6-P2) and sedoheptulose 1,7-bisphosphate (Sed 1,7-P2) to fructose 6-phosphate and sedoheptulose 7-phosphate, respectively. The protein is D-fructose 1,6-bisphosphatase class 2/sedoheptulose 1,7-bisphosphatase of Gloeobacter violaceus (strain ATCC 29082 / PCC 7421).